The following is a 385-amino-acid chain: Proteinase-activated receptor 4 (385 aa).

A signal peptide spans 1-17 (MWGRLLLWPLVLGFSLS). The propeptide at 18-47 (GGTQTPSVYDESGSTGGGDDSTPSILPAPR) is removed for receptor activation. Residues 21–42 (QTPSVYDESGSTGGGDDSTPSI) are disordered. Topologically, residues 48–82 (GYPGQVCANDSDTLELPDSSRALLLGWVPTRLVPA) are extracellular. N-linked (GlcNAc...) asparagine glycosylation is present at Asn-56. Residues 83 to 103 (LYGLVLVVGLPANGLALWVLA) form a helical membrane-spanning segment. Topologically, residues 104–108 (TQAPR) are cytoplasmic. The chain crosses the membrane as a helical span at residues 109-129 (LPSTMLLMNLAAADLLLALAL). Over 130–151 (PPRIAYHLRGQRWPFGEAACRL) the chain is Extracellular. Cys-149 and Cys-228 are oxidised to a cystine. A helical membrane pass occupies residues 152 to 172 (ATAALYGHMYGSVLLLAAVSL). The Cytoplasmic portion of the chain corresponds to 173–192 (DRYLALVHPLRARALRGRRL). Residues 193–213 (ALGLCMAAWLMAAALALPLTL) form a helical membrane-spanning segment. Residues 214-247 (QRQTFRLARSDRVLCHDALPLDAQASHWQPAFTC) are Extracellular-facing. A helical transmembrane segment spans residues 248–268 (LALLGCFLPLLAMLLCYGATL). Over 269–283 (HTLAASGRRYGHALR) the chain is Cytoplasmic. The chain crosses the membrane as a helical span at residues 284–304 (LTAVVLASAVAFFVPSNLLLL). The Extracellular segment spans residues 305 to 319 (LHYSDPSPSAWGNLY). Residues 320–343 (GAYVPSLALSTLNSCVDPFIYYYV) traverse the membrane as a helical segment. The Cytoplasmic portion of the chain corresponds to 344–385 (SAEFRDKVRAGLFQRSPGDTVASKASAEGGSRGMGTHSSLLQ). The disordered stretch occupies residues 362-385 (DTVASKASAEGGSRGMGTHSSLLQ).

It belongs to the G-protein coupled receptor 1 family. In terms of processing, a proteolytic cleavage generates a new N-terminus that functions as a tethered ligand. As to expression, widely expressed, with highest levels in lung, pancreas, thyroid, testis and small intestine. Not expressed in brain, kidney, spinal cord and peripheral blood leukocytes. Also detected in platelets.

The protein resides in the cell membrane. Its activity is regulated as follows. Activated upon interaction by mucunain, a cowhage (Mucuna pruriens) plant cysteine proteinase. In terms of biological role, receptor for activated thrombin or trypsin coupled to G proteins that stimulate phosphoinositide hydrolysis. May play a role in platelets activation. This Homo sapiens (Human) protein is Proteinase-activated receptor 4 (F2RL3).